The chain runs to 404 residues: MQIGQRLGTPLSPSATRVMLLGAGELGKEVIIALQRLGVEVIAVDRYPNAPGHQVAHRAHVIDMTDPDALRALVDAERPHLVVPEIEAIATDALAAIEAAGVCEVIPTARATQLTMNREGIRRLAAEELGLPTSPYAFAQSFDEFAAAVARIGFPCVVKPVMSSSGKGQSVVRSEADIEPAWRYAMAGGRVNHGRVIVEGFIRFDYEITQLTVRAIDPASGQTRTSFCAPIGHLQVAGDYVESWQPQPMSAKALERARDIAHRVTSALGGRGIFGVELFVRGDDVWFSEVSPRPHDTGLVTLASQRQSEFELHARAILGLPVEPALATPAASAVIYGGLDEAGIAFEGVRDALAVPGADLRLFGKPESFAKRRMGVALATGANVDEARERAKRAAAAVRPVSAR.

Residues 25–26 (EL) and Glu85 each bind N(1)-(5-phospho-beta-D-ribosyl)glycinamide. ATP is bound by residues Arg118, Lys159, 164–169 (SSGKGQ), 199–202 (EGFI), and Glu207. An ATP-grasp domain is found at 123-318 (RLAAEELGLP…EFELHARAIL (196 aa)). Mg(2+) contacts are provided by Glu277 and Glu289. Residues Asp296, Lys365, and 372 to 373 (RR) each bind N(1)-(5-phospho-beta-D-ribosyl)glycinamide.

Belongs to the PurK/PurT family. In terms of assembly, homodimer.

The catalysed reaction is N(1)-(5-phospho-beta-D-ribosyl)glycinamide + formate + ATP = N(2)-formyl-N(1)-(5-phospho-beta-D-ribosyl)glycinamide + ADP + phosphate + H(+). The protein operates within purine metabolism; IMP biosynthesis via de novo pathway; N(2)-formyl-N(1)-(5-phospho-D-ribosyl)glycinamide from N(1)-(5-phospho-D-ribosyl)glycinamide (formate route): step 1/1. In terms of biological role, involved in the de novo purine biosynthesis. Catalyzes the transfer of formate to 5-phospho-ribosyl-glycinamide (GAR), producing 5-phospho-ribosyl-N-formylglycinamide (FGAR). Formate is provided by PurU via hydrolysis of 10-formyl-tetrahydrofolate. The protein is Formate-dependent phosphoribosylglycinamide formyltransferase of Burkholderia pseudomallei (strain 668).